Consider the following 172-residue polypeptide: Monopolar attachment protein 1 (172 aa).

The span at 15–30 (KKNKNPKISNSKKKNS) shows a compositional bias: basic residues. The tract at residues 15–43 (KKNKNPKISNSKKKNSTRPALQDKTNQTL) is disordered. Positions 31–43 (TRPALQDKTNQTL) are enriched in polar residues. Positions 100 to 102 (STP) match the POLO box domain (PBD)-binding motif.

As to quaternary structure, interacts with rec8, Interacts with plo1.

It localises to the nucleus. The protein resides in the chromosome. The protein localises to the centromere. Its subcellular location is the kinetochore. Functionally, plays an important role in chromosome segregation during meiosis I by allowing meiotic rec8 to establish cohesion at the centromeric central core and thereby promote the side-by-side structure of kinetochores at meiosis I. Enables monopolar attachment during meiosis I. Required to facilitate kinetochore mono-orientation during meiosis I, when kinetochores on sister chromosomes face the same direction and are thus captured and pulled by spindle fibers from the same pole. Acts in collaboration with plo1. The chain is Monopolar attachment protein 1 (moa1) from Schizosaccharomyces pombe (strain 972 / ATCC 24843) (Fission yeast).